The primary structure comprises 154 residues: Ribosome maturation factor RimP (154 aa).

It belongs to the RimP family.

The protein resides in the cytoplasm. Required for maturation of 30S ribosomal subunits. The protein is Ribosome maturation factor RimP of Prochlorococcus marinus (strain MIT 9303).